A 140-amino-acid polypeptide reads, in one-letter code: Auxin-responsive protein IAA26 (140 aa).

The disordered stretch occupies residues 1 to 40; it reads MASYGDDGVELTELTLGPPGASARRARRGRKNGHPPPSSS. Positions 14–18 match the EAR-like (transcriptional repression) motif; the sequence is LTLGP. The span at 24–33 shows a compositional bias: basic residues; sequence RRARRGRKNG. The region spanning 45–130 is the PB1 domain; sequence AYFVKVSMDG…SCKRMRVMRA (86 aa).

The protein belongs to the Aux/IAA family. As to quaternary structure, homodimers and heterodimers. As to expression, expressed in roots, seedlings and flowers.

The protein localises to the nucleus. Functionally, aux/IAA proteins are short-lived transcriptional factors that function as repressors of early auxin response genes at low auxin concentrations. In Oryza sativa subsp. japonica (Rice), this protein is Auxin-responsive protein IAA26 (IAA26).